The chain runs to 248 residues: 3-deoxy-manno-octulosonate cytidylyltransferase (248 aa).

Belongs to the KdsB family.

The protein localises to the cytoplasm. The enzyme catalyses 3-deoxy-alpha-D-manno-oct-2-ulosonate + CTP = CMP-3-deoxy-beta-D-manno-octulosonate + diphosphate. The protein operates within nucleotide-sugar biosynthesis; CMP-3-deoxy-D-manno-octulosonate biosynthesis; CMP-3-deoxy-D-manno-octulosonate from 3-deoxy-D-manno-octulosonate and CTP: step 1/1. It participates in bacterial outer membrane biogenesis; lipopolysaccharide biosynthesis. Its function is as follows. Activates KDO (a required 8-carbon sugar) for incorporation into bacterial lipopolysaccharide in Gram-negative bacteria. The polypeptide is 3-deoxy-manno-octulosonate cytidylyltransferase (Desulfosudis oleivorans (strain DSM 6200 / JCM 39069 / Hxd3) (Desulfococcus oleovorans)).